The chain runs to 415 residues: Serine hydroxymethyltransferase (415 aa).

(6S)-5,6,7,8-tetrahydrofolate is bound by residues leucine 117 and 121 to 123 (GHL). Lysine 226 bears the N6-(pyridoxal phosphate)lysine mark.

Belongs to the SHMT family. Homodimer. Requires pyridoxal 5'-phosphate as cofactor.

It is found in the cytoplasm. It catalyses the reaction (6R)-5,10-methylene-5,6,7,8-tetrahydrofolate + glycine + H2O = (6S)-5,6,7,8-tetrahydrofolate + L-serine. Its pathway is one-carbon metabolism; tetrahydrofolate interconversion. It participates in amino-acid biosynthesis; glycine biosynthesis; glycine from L-serine: step 1/1. Catalyzes the reversible interconversion of serine and glycine with tetrahydrofolate (THF) serving as the one-carbon carrier. This reaction serves as the major source of one-carbon groups required for the biosynthesis of purines, thymidylate, methionine, and other important biomolecules. Also exhibits THF-independent aldolase activity toward beta-hydroxyamino acids, producing glycine and aldehydes, via a retro-aldol mechanism. The protein is Serine hydroxymethyltransferase of Leptospira interrogans serogroup Icterohaemorrhagiae serovar copenhageni (strain Fiocruz L1-130).